Here is a 557-residue protein sequence, read N- to C-terminus: Arginine--tRNA ligase (557 aa).

Positions 132–142 match the 'HIGH' region motif; it reads ANPTGNLHLGH.

This sequence belongs to the class-I aminoacyl-tRNA synthetase family. In terms of assembly, monomer.

The protein resides in the cytoplasm. It catalyses the reaction tRNA(Arg) + L-arginine + ATP = L-arginyl-tRNA(Arg) + AMP + diphosphate. In Geobacillus thermodenitrificans (strain NG80-2), this protein is Arginine--tRNA ligase.